A 416-amino-acid polypeptide reads, in one-letter code: Glutamyl-tRNA reductase (416 aa).

Residues 49–52 (TCNR), Ser-105, 110–112 (EPQ), and Gln-116 contribute to the substrate site. Cys-50 acts as the Nucleophile in catalysis. An NADP(+)-binding site is contributed by 185–190 (GAGEMI).

Belongs to the glutamyl-tRNA reductase family. As to quaternary structure, homodimer.

The enzyme catalyses (S)-4-amino-5-oxopentanoate + tRNA(Glu) + NADP(+) = L-glutamyl-tRNA(Glu) + NADPH + H(+). It participates in porphyrin-containing compound metabolism; protoporphyrin-IX biosynthesis; 5-aminolevulinate from L-glutamyl-tRNA(Glu): step 1/2. Its function is as follows. Catalyzes the NADPH-dependent reduction of glutamyl-tRNA(Glu) to glutamate 1-semialdehyde (GSA). This is Glutamyl-tRNA reductase from Nitrosomonas europaea (strain ATCC 19718 / CIP 103999 / KCTC 2705 / NBRC 14298).